A 591-amino-acid polypeptide reads, in one-letter code: MAFLQQISGLGALERSCPSIMIGSSFRSGNGRVFDGRGIAYLGSREKFGFNRRRRVVLRVVAMSSSSTPFKMNLNEYMVTLEKPLGIRFALSADGKIFVHAIKKGSNAEKARIIMVGDTLKKASDSSGGTLVEIKDFGDTKKMLVEKTGSFSLVLERPFSPFPIQYLLHLSDLDLLYNRGRVSFVTWNKNLLSSNLRASSQGSGNSGYAAFSSKFFTPQGWKLLNRQSNSFQSGTKKNILSPPISPLVSVFSEDVPGDGEWGYGNFPLEEYIKALDRSKGELSYNHALGMRYSKITEQIYVGSCIQTEEDVENLSEAGITAILNFQGGTEAQNWGIDSQSINDACQKSEVLMINYPIKDADSFDLRKKLPLCVGLLLRLLKKNHRVFVTCTTGFDRSSACVIAYLHWMTDTSLHAAYSFVTGLHACKPDRPAIAWATWDLIAMVDDGKHDGTPTHSVTFVWNGHEGEEVLLVGDFTGNWKEPIKATHKGGPRFETEVRLTQGKYYYKYIINGDWRHSATSPTERDDRGNTNNIIVVGDVANVRPTIQQPRKDANIIKVIERVLTESERFRLAKAARCIAFSVCPIRLCPKS.

The transit peptide at M1–V61 directs the protein to the chloroplast. The region spanning R291–P453 is the Tyrosine-protein phosphatase domain. The active-site Phosphocysteine intermediate is the C390. C390 to R396 lines the substrate pocket.

The protein resides in the plastid. The protein localises to the chloroplast. Its function is as follows. Starch granule-associated phosphoglucan phosphatase involved in the control of starch accumulation. Participates in the regulation of the initial steps of starch degradation at the granule surface. May release a different set of phosphate groups from those removed by DSP4. This chain is Phosphoglucan phosphatase LSF1, chloroplastic (LSF1), found in Arabidopsis thaliana (Mouse-ear cress).